The following is a 675-amino-acid chain: Electrogenic aspartate/glutamate antiporter SLC25A13, mitochondrial (675 aa).

Alanine 2 carries the N-acetylalanine modification. The regulatory N-terminal domain stretch occupies residues alanine 2–proline 295. The Mitochondrial intermembrane segment spans residues alanine 2 to arginine 331. 4 EF-hand domains span residues serine 51–cysteine 86, alanine 87–histidine 122, isoleucine 125–glutamate 157, and isoleucine 158–histidine 193. Positions 66, 68, 70, 72, and 77 each coordinate Ca(2+). The linker loop domain stretch occupies residues leucine 296–glutamine 311. Positions valine 321–glycine 612 are carrier domain. Solcar repeat units follow at residues alanine 326–lysine 418, valine 426–serine 510, and valine 518–tryptophan 606. Residues phenylalanine 332–isoleucine 349 traverse the membrane as a helical segment. Topologically, residues aspartate 350–arginine 392 are mitochondrial matrix. An N6-acetyllysine mark is found at lysine 353 and lysine 372. Residues glycine 393–asparagine 412 traverse the membrane as a helical segment. At aspartate 413–glycine 435 the chain is on the mitochondrial intermembrane side. The helical transmembrane segment at glycine 436–leucine 449 threads the bilayer. At glutamate 450–lysine 484 the chain is on the mitochondrial matrix side. At lysine 453 the chain carries N6-methyllysine. Lysine 484 carries the N6-acetyllysine; alternate modification. N6-succinyllysine; alternate is present on lysine 484. The chain crosses the membrane as a helical span at residues glycine 485–tyrosine 504. Topologically, residues alanine 505–leucine 523 are mitochondrial intermembrane. The chain crosses the membrane as a helical span at residues leucine 524–alanine 541. The Mitochondrial matrix portion of the chain corresponds to aspartate 542–lysine 580. Lysine 580 is subject to N6-succinyllysine. A helical membrane pass occupies residues glycine 581 to tyrosine 600. Over glutamate 601–proline 675 the chain is Mitochondrial intermembrane. The tract at residues glycine 613 to proline 675 is C-terminal domain. Lysine 662 is modified (N6-acetyllysine). Serine 666 carries the phosphoserine modification.

It belongs to the mitochondrial carrier (TC 2.A.29) family. Homodimer (via N-terminus). High levels in liver and low levels in kidney, pancreas, placenta, heart and brain.

The protein localises to the mitochondrion inner membrane. The catalysed reaction is L-aspartate(in) + L-glutamate(out) + H(+)(out) = L-aspartate(out) + L-glutamate(in) + H(+)(in). It catalyses the reaction 3-sulfino-L-alanine(out) + L-glutamate(in) + H(+)(in) = 3-sulfino-L-alanine(in) + L-glutamate(out) + H(+)(out). The enzyme catalyses 3-sulfino-L-alanine(out) + L-aspartate(in) = 3-sulfino-L-alanine(in) + L-aspartate(out). Activated by calcium-binding in the mitochondrial intermembrane space. Inhibited by pyridoxal 5'-phosphate, bathophenathroline, mercurials, diethyl pyrocarbonate and N-ethylmaleimide. Mitochondrial electrogenic aspartate/glutamate antiporter that favors efflux of aspartate and entry of glutamate and proton within the mitochondria as part of the malate-aspartate shuttle. Also mediates the uptake of L-cysteinesulfinate (3-sulfino-L-alanine) by mitochondria in exchange of L-glutamate and proton. Can also exchange L-cysteinesulfinate with aspartate in their anionic form without any proton translocation. Lacks transport activity towards gamma-aminobutyric acid (GABA). The sequence is that of Electrogenic aspartate/glutamate antiporter SLC25A13, mitochondrial from Homo sapiens (Human).